We begin with the raw amino-acid sequence, 439 residues long: Dihydroorotate dehydrogenase (quinone), mitochondrial (439 aa).

Residues 1 to 22 constitute a mitochondrion transit peptide; that stretch reads MMHRVGFNVIGRRSFFTVNARR. The helical transmembrane segment at 37–53 threads the bilayer; sequence LTALLLAGSAGYLYFMN. Residues 119 to 123 and serine 143 contribute to the FMN site; that span reads AGLDK. Residue lysine 123 coordinates substrate. 168 to 172 contributes to the substrate binding site; that stretch reads NRYGF. Asparagine 215 and asparagine 245 together coordinate FMN. 245–250 is a substrate binding site; the sequence is NVSSPN. The active-site Nucleophile is serine 248. The FMN site is built by lysine 296 and serine 324. 325 to 326 contributes to the substrate binding site; it reads NT. FMN contacts are provided by residues glycine 350, glycine 380, and 401–402; that span reads YT.

The protein belongs to the dihydroorotate dehydrogenase family. Type 2 subfamily. Requires FMN as cofactor.

It localises to the mitochondrion inner membrane. The enzyme catalyses (S)-dihydroorotate + a quinone = orotate + a quinol. Its pathway is pyrimidine metabolism; UMP biosynthesis via de novo pathway; orotate from (S)-dihydroorotate (quinone route): step 1/1. Functionally, catalyzes the conversion of dihydroorotate to orotate with quinone as electron acceptor. This is Dihydroorotate dehydrogenase (quinone), mitochondrial (URA9) from Candida glabrata (strain ATCC 2001 / BCRC 20586 / JCM 3761 / NBRC 0622 / NRRL Y-65 / CBS 138) (Yeast).